Here is a 182-residue protein sequence, read N- to C-terminus: MSGGNLQHLYFNKIRVELQKQFEYTNVHQIPKLTKITLNRGLGTLYQQSPKVFESSVSDLMLITGQKPRFNKSKKSIAGFKLREGTVVGLSVTLRRKKMYAFLEKLIHFSLPAARDFRGLSTKNFDGLGNYNLGIKEHAIFPEIDFDKIDHSYGLNICIVTTANNDIEGKALLKFLGMPFKD.

This sequence belongs to the universal ribosomal protein uL5 family. In terms of assembly, part of the 50S ribosomal subunit; contacts the 5S rRNA.

It is found in the plastid. Its subcellular location is the chloroplast. Binds 5S rRNA, forms part of the central protuberance of the 50S subunit. This Cyanidium caldarium (Red alga) protein is Large ribosomal subunit protein uL5c (rpl5).